The chain runs to 289 residues: tRNA dimethylallyltransferase (289 aa).

Residue 9 to 16 coordinates ATP; that stretch reads GTTASGKT. A substrate-binding site is contributed by 11-16; the sequence is TASGKT. Residues 34-37 are interaction with substrate tRNA; it reads DSLC.

This sequence belongs to the IPP transferase family. As to quaternary structure, monomer. The cofactor is Mg(2+).

It catalyses the reaction adenosine(37) in tRNA + dimethylallyl diphosphate = N(6)-dimethylallyladenosine(37) in tRNA + diphosphate. In terms of biological role, catalyzes the transfer of a dimethylallyl group onto the adenine at position 37 in tRNAs that read codons beginning with uridine, leading to the formation of N6-(dimethylallyl)adenosine (i(6)A). This chain is tRNA dimethylallyltransferase, found in Campylobacter jejuni subsp. jejuni serotype O:23/36 (strain 81-176).